The sequence spans 40 residues: RNA replication protein (40 aa).

The protein belongs to the potexviruses/carlaviruses RNA replication protein family.

The enzyme catalyses RNA(n) + a ribonucleoside 5'-triphosphate = RNA(n+1) + diphosphate. It catalyses the reaction ATP + H2O = ADP + phosphate + H(+). Its function is as follows. RNA replication. The central part of this protein possibly functions as an ATP-binding helicase. The chain is RNA replication protein from Lily symptomless virus (LSV).